The following is a 203-amino-acid chain: Thymidine kinase (203 aa).

ATP is bound by residues 9-16 and 87-90; these read ATMNAGKT and DEAQ. Glu-88 (proton acceptor) is an active-site residue. Residues Cys-145, Cys-147, Cys-181, and His-184 each coordinate Zn(2+).

The protein belongs to the thymidine kinase family. Homotetramer.

It is found in the cytoplasm. It catalyses the reaction thymidine + ATP = dTMP + ADP + H(+). This chain is Thymidine kinase, found in Mesorhizobium japonicum (strain LMG 29417 / CECT 9101 / MAFF 303099) (Mesorhizobium loti (strain MAFF 303099)).